A 437-amino-acid polypeptide reads, in one-letter code: GTPase Era, mitochondrial (437 aa).

The transit peptide at 1-43 (MAAPSWRGARLVQSVLRVWQVGPHVARERVIPFSSLLGFQRRC) directs the protein to the mitochondrion. Residues 112–330 (RVLRVVLLGA…QYLLTQAQPG (219 aa)) enclose the Era-type G domain. The segment at 120–127 (GAPNAGKS) is G1. 120–127 (GAPNAGKS) is a binding site for GTP. Positions 146 to 150 (HTTRC) are G2. Residues 167–170 (DTPG) form a G3 region. 167–171 (DTPGI) contacts GTP. The residue at position 173 (Ser173) is a Phosphoserine. A GTP-binding site is contributed by 236-239 (NKVD). The segment at 236-239 (NKVD) is G4. Residues 271–290 (HSHPGTHCPSPAVKDPNTQS) form a disordered region. Residues 308 to 310 (LSA) form a G5 region. Residues 360–437 (LPQEVPYNVQ…DIRLSVKLLK (78 aa)) enclose the KH type-2 domain.

Belongs to the TRAFAC class TrmE-Era-EngA-EngB-Septin-like GTPase superfamily. Era GTPase family.

It localises to the mitochondrion matrix. The protein localises to the mitochondrion inner membrane. Its function is as follows. Probable GTPase that plays a role in the mitochondrial ribosomal small subunit assembly. Specifically binds the 12S mitochondrial rRNA (12S mt-rRNA) to a 33 nucleotide section delineating the 3' terminal stem-loop region. May act as a chaperone that protects the 12S mt-rRNA on the 28S mitoribosomal subunit during ribosomal small subunit assembly. The sequence is that of GTPase Era, mitochondrial (ERAL1) from Homo sapiens (Human).